A 313-amino-acid polypeptide reads, in one-letter code: Protoheme IX farnesyltransferase (313 aa).

Helical transmembrane passes span 23-43 (ILAY…VTTI), 56-76 (PLLI…ANTL), 107-127 (LIFG…TANL), 128-148 (LSGL…TLVL), 155-175 (NVVW…SAVT), 182-202 (ALVM…ALAM), 243-263 (LALA…VWFL), and 291-311 (YLAV…PTLF).

The protein belongs to the UbiA prenyltransferase family. Protoheme IX farnesyltransferase subfamily.

It is found in the cell membrane. It carries out the reaction heme b + (2E,6E)-farnesyl diphosphate + H2O = Fe(II)-heme o + diphosphate. It participates in porphyrin-containing compound metabolism; heme O biosynthesis; heme O from protoheme: step 1/1. In terms of biological role, converts heme B (protoheme IX) to heme O by substitution of the vinyl group on carbon 2 of heme B porphyrin ring with a hydroxyethyl farnesyl side group. The chain is Protoheme IX farnesyltransferase from Mycobacteroides abscessus (strain ATCC 19977 / DSM 44196 / CCUG 20993 / CIP 104536 / JCM 13569 / NCTC 13031 / TMC 1543 / L948) (Mycobacterium abscessus).